Reading from the N-terminus, the 204-residue chain is Large ribosomal subunit protein bL25 (204 aa).

A Phosphoserine modification is found at Ser123.

Belongs to the bacterial ribosomal protein bL25 family. CTC subfamily. Part of the 50S ribosomal subunit; part of the 5S rRNA/L5/L18/L25 subcomplex. Contacts the 5S rRNA. Binds to the 5S rRNA independently of L5 and L18.

Its function is as follows. This is one of the proteins that binds to the 5S RNA in the ribosome where it forms part of the central protuberance. This Pseudomonas aeruginosa (strain UCBPP-PA14) protein is Large ribosomal subunit protein bL25.